The following is a 161-amino-acid chain: Disulfide bond formation protein B (161 aa).

The Cytoplasmic portion of the chain corresponds to 1–8 (MQANSRAY). A helical membrane pass occupies residues 9 to 25 (FLLIAFISFGLVGFALY). At 26 to 43 (LQFEKGYQPCPLCIMQRF) the chain is on the periplasmic side. Residues Cys35 and Cys38 are joined by a disulfide bond. A helical transmembrane segment spans residues 44 to 58 (AFIGIGLFSLLAVIA). Over 59–63 (QNTRS) the chain is Cytoplasmic. The helical transmembrane segment at 64-81 (LWQGLGMLSGVGGIAVAV) threads the bilayer. Topologically, residues 82–136 (YHVSLLLNPKASCGIDPLENWVNALPTAKVLPQVFYSDGLCTAPLPPVLGLSVPA) are periplasmic. A disulfide bridge links Cys94 with Cys122. A helical membrane pass occupies residues 137-155 (WSLIWLFILTLTLAVGLIR). Residues 156-161 (REKNFR) are Cytoplasmic-facing.

It belongs to the DsbB family.

The protein localises to the cell inner membrane. In terms of biological role, required for disulfide bond formation in some periplasmic proteins. Acts by oxidizing the DsbA protein. This chain is Disulfide bond formation protein B, found in Cupriavidus pinatubonensis (strain JMP 134 / LMG 1197) (Cupriavidus necator (strain JMP 134)).